Here is a 651-residue protein sequence, read N- to C-terminus: Aspartate--tRNA ligase, mitochondrial (651 aa).

A mitochondrion-targeting transit peptide spans 1-44; sequence MFCWLSRLCGELSTPTRRTTQLIWSSAARSMVLSSQRIPELSSF. At T216 the chain carries Phosphothreonine. S239 carries the phosphoserine modification. Residues 241-244 are aspartate; the sequence is QQFK. L-aspartate is bound at residue R263. 263–265 contributes to the ATP binding site; sequence RDE. Residue K379 is modified to N6-acetyllysine. E532 serves as a coordination point for ATP. R539 contributes to the L-aspartate binding site. ATP is bound at residue 581–584; the sequence is GLDR.

This sequence belongs to the class-II aminoacyl-tRNA synthetase family. Type 1 subfamily. In terms of assembly, homodimer.

The protein resides in the mitochondrion matrix. Its subcellular location is the mitochondrion membrane. It catalyses the reaction tRNA(Asp) + L-aspartate + ATP = L-aspartyl-tRNA(Asp) + AMP + diphosphate. Functionally, catalyzes the attachment of aspartate to tRNA(Asp) in a two-step reaction: aspartate is first activated by ATP to form Asp-AMP and then transferred to the acceptor end of tRNA(Asp). The chain is Aspartate--tRNA ligase, mitochondrial (DARS2) from Bos taurus (Bovine).